Consider the following 196-residue polypeptide: Peptide deformylase (196 aa).

Residues C103 and H145 each coordinate Fe cation. Residue E146 is part of the active site. H149 contributes to the Fe cation binding site.

The protein belongs to the polypeptide deformylase family. Fe(2+) is required as a cofactor.

The enzyme catalyses N-terminal N-formyl-L-methionyl-[peptide] + H2O = N-terminal L-methionyl-[peptide] + formate. In terms of biological role, removes the formyl group from the N-terminal Met of newly synthesized proteins. Requires at least a dipeptide for an efficient rate of reaction. N-terminal L-methionine is a prerequisite for activity but the enzyme has broad specificity at other positions. This is Peptide deformylase from Rhodococcus opacus (strain B4).